The sequence spans 185 residues: Large ribosomal subunit protein uL5 (185 aa).

It belongs to the universal ribosomal protein uL5 family. Part of the 50S ribosomal subunit; part of the 5S rRNA/L5/L18/L25 subcomplex. Contacts the 5S rRNA and the P site tRNA. Forms a bridge to the 30S subunit in the 70S ribosome.

Functionally, this is one of the proteins that bind and probably mediate the attachment of the 5S RNA into the large ribosomal subunit, where it forms part of the central protuberance. In the 70S ribosome it contacts protein S13 of the 30S subunit (bridge B1b), connecting the 2 subunits; this bridge is implicated in subunit movement. Contacts the P site tRNA; the 5S rRNA and some of its associated proteins might help stabilize positioning of ribosome-bound tRNAs. This chain is Large ribosomal subunit protein uL5, found in Protochlamydia amoebophila (strain UWE25).